The following is a 118-amino-acid chain: Large ribosomal subunit protein uL18 (118 aa).

The protein belongs to the universal ribosomal protein uL18 family. Part of the 50S ribosomal subunit; part of the 5S rRNA/L5/L18/L25 subcomplex. Contacts the 5S and 23S rRNAs.

Its function is as follows. This is one of the proteins that bind and probably mediate the attachment of the 5S RNA into the large ribosomal subunit, where it forms part of the central protuberance. The polypeptide is Large ribosomal subunit protein uL18 (Campylobacter hominis (strain ATCC BAA-381 / DSM 21671 / CCUG 45161 / LMG 19568 / NCTC 13146 / CH001A)).